Here is a 251-residue protein sequence, read N- to C-terminus: Ribonuclease 3 (251 aa).

In terms of domain architecture, RNase III spans 3-125 (LATLETRLGH…LFGAVFLDAG (123 aa)). Glutamate 38 provides a ligand contact to Mg(2+). Residue aspartate 42 is part of the active site. The Mg(2+) site is built by aspartate 111 and glutamate 114. Glutamate 114 is an active-site residue. Residues 152 to 222 (DAKTLLQEFL…AKLALEAALV (71 aa)) enclose the DRBM domain.

Belongs to the ribonuclease III family. As to quaternary structure, homodimer. Mg(2+) is required as a cofactor.

It localises to the cytoplasm. The enzyme catalyses Endonucleolytic cleavage to 5'-phosphomonoester.. Functionally, digests double-stranded RNA. Involved in the processing of primary rRNA transcript to yield the immediate precursors to the large and small rRNAs (23S and 16S). Processes some mRNAs, and tRNAs when they are encoded in the rRNA operon. Processes pre-crRNA and tracrRNA of type II CRISPR loci if present in the organism. This Bordetella avium (strain 197N) protein is Ribonuclease 3.